The chain runs to 556 residues: 2-succinyl-5-enolpyruvyl-6-hydroxy-3-cyclohexene-1-carboxylate synthase (556 aa).

Belongs to the TPP enzyme family. MenD subfamily. As to quaternary structure, homodimer. Mg(2+) is required as a cofactor. Mn(2+) serves as cofactor. The cofactor is thiamine diphosphate.

It carries out the reaction isochorismate + 2-oxoglutarate + H(+) = 5-enolpyruvoyl-6-hydroxy-2-succinyl-cyclohex-3-ene-1-carboxylate + CO2. Its pathway is quinol/quinone metabolism; 1,4-dihydroxy-2-naphthoate biosynthesis; 1,4-dihydroxy-2-naphthoate from chorismate: step 2/7. The protein operates within quinol/quinone metabolism; menaquinone biosynthesis. In terms of biological role, catalyzes the thiamine diphosphate-dependent decarboxylation of 2-oxoglutarate and the subsequent addition of the resulting succinic semialdehyde-thiamine pyrophosphate anion to isochorismate to yield 2-succinyl-5-enolpyruvyl-6-hydroxy-3-cyclohexene-1-carboxylate (SEPHCHC). The sequence is that of 2-succinyl-5-enolpyruvyl-6-hydroxy-3-cyclohexene-1-carboxylate synthase from Citrobacter koseri (strain ATCC BAA-895 / CDC 4225-83 / SGSC4696).